The chain runs to 131 residues: ATP synthase epsilon chain, chloroplastic (131 aa).

This sequence belongs to the ATPase epsilon chain family. In terms of assembly, F-type ATPases have 2 components, CF(1) - the catalytic core - and CF(0) - the membrane proton channel. CF(1) has five subunits: alpha(3), beta(3), gamma(1), delta(1), epsilon(1). CF(0) has three main subunits: a, b and c.

It localises to the plastid. It is found in the chloroplast thylakoid membrane. In terms of biological role, produces ATP from ADP in the presence of a proton gradient across the membrane. In Guillardia theta (Cryptophyte), this protein is ATP synthase epsilon chain, chloroplastic.